The chain runs to 543 residues: CTP synthase (543 aa).

The amidoligase domain stretch occupies residues 1 to 265; that stretch reads MARYIFITGG…DDEVLAAFAI (265 aa). Ser-13 serves as a coordination point for CTP. Ser-13 is a UTP binding site. An ATP-binding site is contributed by 14 to 19; it reads SLGKGL. Residue Tyr-54 coordinates L-glutamine. Asp-71 is a binding site for ATP. Residues Asp-71 and Glu-139 each contribute to the Mg(2+) site. CTP is bound by residues 146-148, 186-191, and Lys-222; these read DIE and KTKPTQ. UTP is bound by residues 186-191 and Lys-222; that span reads KTKPTQ. 238–240 is a binding site for ATP; that stretch reads RDA. The 252-residue stretch at 291-542 folds into the Glutamine amidotransferase type-1 domain; the sequence is TIAIVGKYTG…IEAALVRSRL (252 aa). Gly-353 lines the L-glutamine pocket. The active-site Nucleophile; for glutamine hydrolysis is Cys-380. Residues 381 to 384, Glu-404, and Arg-470 each bind L-glutamine; that span reads FGMQ. Active-site residues include His-515 and Glu-517.

Belongs to the CTP synthase family. In terms of assembly, homotetramer.

The catalysed reaction is UTP + L-glutamine + ATP + H2O = CTP + L-glutamate + ADP + phosphate + 2 H(+). It carries out the reaction L-glutamine + H2O = L-glutamate + NH4(+). The enzyme catalyses UTP + NH4(+) + ATP = CTP + ADP + phosphate + 2 H(+). Its pathway is pyrimidine metabolism; CTP biosynthesis via de novo pathway; CTP from UDP: step 2/2. Allosterically activated by GTP, when glutamine is the substrate; GTP has no effect on the reaction when ammonia is the substrate. The allosteric effector GTP functions by stabilizing the protein conformation that binds the tetrahedral intermediate(s) formed during glutamine hydrolysis. Inhibited by the product CTP, via allosteric rather than competitive inhibition. In terms of biological role, catalyzes the ATP-dependent amination of UTP to CTP with either L-glutamine or ammonia as the source of nitrogen. Regulates intracellular CTP levels through interactions with the four ribonucleotide triphosphates. The polypeptide is CTP synthase (Rhodopseudomonas palustris (strain BisB5)).